Consider the following 201-residue polypeptide: Protamine-like protein 99C (201 aa).

Residues glycine 93–serine 143 form a disordered region. Positions glycine 94–proline 104 are enriched in polar residues. Over residues alanine 125–serine 143 the composition is skewed to basic residues.

It belongs to the UPF0771 family.

It is found in the nucleus. It localises to the chromosome. Functionally, regulates chromatin compaction in spermatid nuclei and is essential for male fertility. Functions in parallel with other chromatin-condensing proteins such as ProtA, ProtB and Mst77F. This chain is Protamine-like protein 99C, found in Drosophila melanogaster (Fruit fly).